A 330-amino-acid chain; its full sequence is GMP reductase (330 aa).

Cysteine 180 functions as the Thioimidate intermediate in the catalytic mechanism. 209-232 (LIADGGIRHNGDIAKSVRFGASMV) is an NADP(+) binding site.

It belongs to the IMPDH/GMPR family. GuaC type 2 subfamily.

The catalysed reaction is IMP + NH4(+) + NADP(+) = GMP + NADPH + 2 H(+). In terms of biological role, catalyzes the irreversible NADPH-dependent deamination of GMP to IMP. It functions in the conversion of nucleobase, nucleoside and nucleotide derivatives of G to A nucleotides, and in maintaining the intracellular balance of A and G nucleotides. The sequence is that of GMP reductase from Lactobacillus delbrueckii subsp. bulgaricus (strain ATCC BAA-365 / Lb-18).